A 487-amino-acid polypeptide reads, in one-letter code: L-tartrate/succinate antiporter (487 aa).

14 helical membrane-spanning segments follow: residues 10–30 (YLAP…AGLE), 33–53 (TWLY…EPVP), 54–74 (GAVV…WLLF), 93–113 (WAVS…FMFG), 137–157 (TLFL…VTPS), 189–209 (IGSY…AIFL), 236–256 (FLGM…LAYV), 292–312 (LMVG…AAMV), 313–333 (GYSV…DIVS), 340–360 (VFFW…TGFI), 370–390 (SLSG…FYLL), 393–413 (FFAS…AAAL), 418–438 (IPLP…SILT), and 465–485 (IFGL…MPVV).

Belongs to the SLC13A/DASS transporter (TC 2.A.47) family. DIT1 subfamily.

The protein localises to the cell inner membrane. The enzyme catalyses (2R,3R)-tartrate(out) + succinate(in) = (2R,3R)-tartrate(in) + succinate(out). In terms of biological role, catalyzes the uptake of tartrate in exchange for intracellular succinate. Essential for anaerobic L-tartrate fermentation. The polypeptide is L-tartrate/succinate antiporter (ttdT) (Shigella flexneri).